The primary structure comprises 243 residues: ATP synthase subunit a (243 aa).

The next 8 helical transmembrane spans lie at N29–L49, V54–I74, V89–F109, H114–F134, F141–I161, L177–N197, I200–V220, and A221–N241.

This sequence belongs to the ATPase A chain family. In terms of assembly, F-type ATPases have 2 components, CF(1) - the catalytic core - and CF(0) - the membrane proton channel. CF(1) has five subunits: alpha(3), beta(3), gamma(1), delta(1), epsilon(1). CF(0) has three main subunits: a(1), b(2) and c(9-12). The alpha and beta chains form an alternating ring which encloses part of the gamma chain. CF(1) is attached to CF(0) by a central stalk formed by the gamma and epsilon chains, while a peripheral stalk is formed by the delta and b chains.

The protein localises to the cell inner membrane. Key component of the proton channel; it plays a direct role in the translocation of protons across the membrane. The polypeptide is ATP synthase subunit a (Ehrlichia ruminantium (strain Welgevonden)).